The chain runs to 208 residues: MAILKAEERTDSRRSSLRRIRQSGYVPGVIYGRNLENKSVALDSIELLKILRAEGKNTIINLDINGDQHSVMVTELQTDPLKDSIVHADFKVVDMEAEMEATVPVNLTGEAEGIKQGGVLQQPLYELSVTAKPKNIPQTIEVDISSLEVNDVLTVGDIPTKGDYSYNHEPDEVVASILPPQKQEETEAESAAQDVEEPEKGTEEEKEE.

Positions 163-208 (DYSYNHEPDEVVASILPPQKQEETEAESAAQDVEEPEKGTEEEKEE) are disordered. Over residues 198-208 (PEKGTEEEKEE) the composition is skewed to basic and acidic residues.

It belongs to the bacterial ribosomal protein bL25 family. CTC subfamily. As to quaternary structure, part of the 50S ribosomal subunit; part of the 5S rRNA/L5/L18/L25 subcomplex. Contacts the 5S rRNA. Binds to the 5S rRNA independently of L5 and L18.

Functionally, this is one of the proteins that binds to the 5S RNA in the ribosome where it forms part of the central protuberance. This is Large ribosomal subunit protein bL25 from Bacillus licheniformis (strain ATCC 14580 / DSM 13 / JCM 2505 / CCUG 7422 / NBRC 12200 / NCIMB 9375 / NCTC 10341 / NRRL NRS-1264 / Gibson 46).